Reading from the N-terminus, the 248-residue chain is Transcription factor MYBC1 (248 aa).

The myb-like GARP DNA-binding region spans 102-161 (TLKRPRLVWTPQLHKRFVDAVGHLGIKNAVPKTIMQLMSVEGLTRENVASHLQKYRLYLR).

In terms of tissue distribution, expressed in roots, leaves, stems, petioles, filaments, stigma, pedicels, sepals, anthers, petals, and siliques.

The protein resides in the nucleus. Probable transcription factor that acts as a negative regulator of freezing tolerance via a CBF-independent pathway. The sequence is that of Transcription factor MYBC1 from Arabidopsis thaliana (Mouse-ear cress).